The following is a 603-amino-acid chain: Elongation factor 4 (603 aa).

The tr-type G domain occupies 7 to 189 (SRLRNFCIIA…AVVDRIPSPK (183 aa)). Residues 19 to 24 (DHGKST) and 136 to 139 (NKVD) contribute to the GTP site.

The protein belongs to the TRAFAC class translation factor GTPase superfamily. Classic translation factor GTPase family. LepA subfamily.

Its subcellular location is the cell inner membrane. It catalyses the reaction GTP + H2O = GDP + phosphate + H(+). Required for accurate and efficient protein synthesis under certain stress conditions. May act as a fidelity factor of the translation reaction, by catalyzing a one-codon backward translocation of tRNAs on improperly translocated ribosomes. Back-translocation proceeds from a post-translocation (POST) complex to a pre-translocation (PRE) complex, thus giving elongation factor G a second chance to translocate the tRNAs correctly. Binds to ribosomes in a GTP-dependent manner. This Prochlorococcus marinus (strain NATL1A) protein is Elongation factor 4.